Reading from the N-terminus, the 1010-residue chain is Lethal(2) giant larvae protein homolog SRO77 (1010 aa).

WD repeat units lie at residues 47–80, 87–122, 127–163, 182–215, 240–275, 299–364, 372–407, 431–504, 518–595, 602–637, 649–700, 709–763, 768–815, and 829–852; these read TVTTFDYTQSLLAVATTAGEIHVYGQKQIEVVFT, IKHMRFIKGIYLIAVDEKSNIIVLSVHSKQILTTVF, ITCIETDPSLDWMLIGLESGSILIYDVDRNQMSKLKI, SIQWNPRDIGTILISYEHITVIYSFIDYKVKQHF, VIQSLYHPNSLHILTVHEDNSLVFWDVNSGKLIHAR, AIFK…QKLF, LINFLPLPKASPYFGGCHDTNLILLLLEDGELETLI, VTTC…FEVN, KNIS…STVI, VSAIMNSNIGFVAVGFIEGTLIILDRRGPAIIFNEN, VSTV…DATK, GINS…THAL, IATS…KNLR, and SILENGDIVIRTGKFQASLISVLN. The segment at 932–958 is disordered; the sequence is SNAARKLPPGTEDHRYARPVRSSGRSN.

This sequence belongs to the WD repeat L(2)GL family. In terms of assembly, interacts with SEC9.

Functionally, acts as an allosteric regulator of polarized exocytosis by promoting the targeted fusion of vesicles with the plasma membrane. Involved in maintenance of ion homeostasis in cells exposed to NaCl stress. May be involved in the targeting of the myosin proteins to their intrinsic pathways. Multicopy suppressor of RHO3. May also participate in the maintenance of cell polarity and bud growth. In Saccharomyces cerevisiae (strain ATCC 204508 / S288c) (Baker's yeast), this protein is Lethal(2) giant larvae protein homolog SRO77 (SRO77).